A 356-amino-acid chain; its full sequence is S-adenosylmethionine:tRNA ribosyltransferase-isomerase (356 aa).

This sequence belongs to the QueA family. As to quaternary structure, monomer.

It localises to the cytoplasm. It catalyses the reaction 7-aminomethyl-7-carbaguanosine(34) in tRNA + S-adenosyl-L-methionine = epoxyqueuosine(34) in tRNA + adenine + L-methionine + 2 H(+). Its pathway is tRNA modification; tRNA-queuosine biosynthesis. Transfers and isomerizes the ribose moiety from AdoMet to the 7-aminomethyl group of 7-deazaguanine (preQ1-tRNA) to give epoxyqueuosine (oQ-tRNA). This chain is S-adenosylmethionine:tRNA ribosyltransferase-isomerase, found in Nitrosospira multiformis (strain ATCC 25196 / NCIMB 11849 / C 71).